The chain runs to 459 residues: Cysteine--tRNA ligase (459 aa).

Zn(2+) is bound at residue Cys28. The short motif at 30 to 40 is the 'HIGH' region element; that stretch reads VTVYDLCHFGH. Residues Cys209, His234, and Glu238 each coordinate Zn(2+). The 'KMSKS' region motif lies at 266–270; it reads KMSKS. Lys269 serves as a coordination point for ATP.

This sequence belongs to the class-I aminoacyl-tRNA synthetase family. Monomer. Zn(2+) serves as cofactor.

The protein resides in the cytoplasm. It catalyses the reaction tRNA(Cys) + L-cysteine + ATP = L-cysteinyl-tRNA(Cys) + AMP + diphosphate. The chain is Cysteine--tRNA ligase from Actinobacillus pleuropneumoniae serotype 5b (strain L20).